Consider the following 338-residue polypeptide: NAC domain-containing protein 46 (338 aa).

Residues 20 to 171 (LPPGFRFHPT…EWVVCRVFHK (152 aa)) enclose the NAC domain. The DNA-binding element occupies 118 to 177 (VGMKKTLVFYTGRAPKGEKTNWVMHEYRLDGKYSYHNLPKTARDEWVVCRVFHKNAPSTT).

In terms of assembly, interacts with RCD1.

The protein resides in the nucleus. Transcriptional activator that acts as a positive regulator of leaf senescence. Activates NYC1, SGR1, SGR2 and PAO, which are genes involved in chlorophyll catabolic processes. Activates senescence-associated genes, such as RNS1, SAG12 and SAG13. The polypeptide is NAC domain-containing protein 46 (Arabidopsis thaliana (Mouse-ear cress)).